A 213-amino-acid polypeptide reads, in one-letter code: Proteasome subunit beta 1 (213 aa).

The propeptide at 1–18 (MVFIAVFNGVFAMSSLPG) is removed in mature form; by autocatalysis. Catalysis depends on Thr19, which acts as the Nucleophile.

Belongs to the peptidase T1B family. In terms of assembly, the 20S proteasome core is composed of 14 alpha and 14 beta subunits that assemble into four stacked heptameric rings, resulting in a barrel-shaped structure. The two inner rings, each composed of seven catalytic beta subunits, are sandwiched by two outer rings, each composed of seven alpha subunits. The catalytic chamber with the active sites is on the inside of the barrel. Has a gated structure, the ends of the cylinder being occluded by the N-termini of the alpha-subunits. Is capped at one or both ends by the proteasome regulatory ATPase, PAN.

The protein resides in the cytoplasm. The enzyme catalyses Cleavage of peptide bonds with very broad specificity.. With respect to regulation, the formation of the proteasomal ATPase PAN-20S proteasome complex, via the docking of the C-termini of PAN into the intersubunit pockets in the alpha-rings, triggers opening of the gate for substrate entry. Interconversion between the open-gate and close-gate conformations leads to a dynamic regulation of the 20S proteasome proteolysis activity. Component of the proteasome core, a large protease complex with broad specificity involved in protein degradation. The chain is Proteasome subunit beta 1 from Staphylothermus marinus (strain ATCC 43588 / DSM 3639 / JCM 9404 / F1).